The chain runs to 187 residues: Resolvase OPG149 (187 aa).

Belongs to the RuvC family. Poxviruses-type subfamily. It depends on Mg(2+) as a cofactor.

In terms of biological role, plays a role in DNA replication by cleaving viral DNA concatamers to yield unit-length viral genomes. The concatamer junctions contain inverted repeat sequences that can be extruded as cruciforms, yielding Holliday junctions that A22 protein cleaves. The chain is Resolvase OPG149 (OPG149) from Vaccinia virus (strain Western Reserve) (VACV).